A 437-amino-acid polypeptide reads, in one-letter code: Doublesex- and mab-3-related transcription factor A2 (437 aa).

The segment at residues 49–96 (CARCRNHGVVSALKGHKRYCRWKDCMCAKCTLIAERQRVMAAQVALRR) is a DNA-binding region (DM). Positions 160-253 (IPRSMTPQLP…DPSSSSLARQ (94 aa)) are disordered. Low complexity-rich tracts occupy residues 179–201 (SEPVSGSAPGASSPEAQPGSGSE) and 223–235 (SPSLISPLSSESG). A DMA domain is found at 254–289 (RTPINILTRVFPAQKRSVLELVLQGCGGDVVQAIEQ).

This sequence belongs to the DMRT family.

Its subcellular location is the nucleus. Functionally, may be involved in sexual development. The polypeptide is Doublesex- and mab-3-related transcription factor A2 (dmrta2) (Xenopus laevis (African clawed frog)).